Reading from the N-terminus, the 449-residue chain is Exodeoxyribonuclease 7 large subunit (449 aa).

This sequence belongs to the XseA family. As to quaternary structure, heterooligomer composed of large and small subunits.

It is found in the cytoplasm. It catalyses the reaction Exonucleolytic cleavage in either 5'- to 3'- or 3'- to 5'-direction to yield nucleoside 5'-phosphates.. Bidirectionally degrades single-stranded DNA into large acid-insoluble oligonucleotides, which are then degraded further into small acid-soluble oligonucleotides. The polypeptide is Exodeoxyribonuclease 7 large subunit (Salmonella typhi).